The primary structure comprises 84 residues: Beta-defensin 119 (84 aa).

Residues 1–21 (MKLLYLFLAILLVIEEPVISG) form the signal peptide. 3 disulfide bridges follow: C28–C55, C35–C49, and C39–C56.

Belongs to the beta-defensin family.

It is found in the secreted. Its function is as follows. Has antibacterial activity. This is Beta-defensin 119 (DEFB119) from Pongo pygmaeus (Bornean orangutan).